Consider the following 319-residue polypeptide: Acetyl-coenzyme A carboxylase carboxyl transferase subunit alpha (319 aa).

The 262-residue stretch at 35–296 folds into the CoA carboxyltransferase C-terminal domain; that stretch reads DLDKEIEQLE…KDMLVKQLEE (262 aa).

Belongs to the AccA family. In terms of assembly, acetyl-CoA carboxylase is a heterohexamer composed of biotin carboxyl carrier protein (AccB), biotin carboxylase (AccC) and two subunits each of ACCase subunit alpha (AccA) and ACCase subunit beta (AccD).

The protein localises to the cytoplasm. It catalyses the reaction N(6)-carboxybiotinyl-L-lysyl-[protein] + acetyl-CoA = N(6)-biotinyl-L-lysyl-[protein] + malonyl-CoA. The protein operates within lipid metabolism; malonyl-CoA biosynthesis; malonyl-CoA from acetyl-CoA: step 1/1. Its function is as follows. Component of the acetyl coenzyme A carboxylase (ACC) complex. First, biotin carboxylase catalyzes the carboxylation of biotin on its carrier protein (BCCP) and then the CO(2) group is transferred by the carboxyltransferase to acetyl-CoA to form malonyl-CoA. The protein is Acetyl-coenzyme A carboxylase carboxyl transferase subunit alpha of Vibrio atlanticus (strain LGP32) (Vibrio splendidus (strain Mel32)).